Here is a 300-residue protein sequence, read N- to C-terminus: UDP-N-acetylenolpyruvoylglucosamine reductase (300 aa).

In terms of domain architecture, FAD-binding PCMH-type spans 28 to 193; the sequence is KTGGPADVLA…LQATFALEKG (166 aa). R172 is a catalytic residue. S222 acts as the Proton donor in catalysis. Residue E292 is part of the active site.

Belongs to the MurB family. FAD is required as a cofactor.

It is found in the cytoplasm. The enzyme catalyses UDP-N-acetyl-alpha-D-muramate + NADP(+) = UDP-N-acetyl-3-O-(1-carboxyvinyl)-alpha-D-glucosamine + NADPH + H(+). It participates in cell wall biogenesis; peptidoglycan biosynthesis. In terms of biological role, cell wall formation. In Enterococcus faecalis (strain ATCC 700802 / V583), this protein is UDP-N-acetylenolpyruvoylglucosamine reductase.